We begin with the raw amino-acid sequence, 58 residues long: Preprotein translocase subunit SecG (58 aa).

Topologically, residues 1-32 (MAQKKKSSGSGLMSSAGLMTYYDADKKAIHVQ) are cytoplasmic. The chain crosses the membrane as a helical span at residues 33-54 (PKTVFIFGAICGIVILAFSAGF). At 55–58 (GLWP) the chain is on the extracellular side.

Belongs to the SEC61-beta family. As to quaternary structure, component of the protein translocase complex. Heterotrimer consisting of alpha (SecY), beta (SecG) and gamma (SecE) subunits. Can form oligomers of the heterotrimer.

The protein resides in the cell membrane. Functionally, involved in protein export. The function of the beta subunit is unknown, but it may be involved in stabilization of the trimeric complex. The sequence is that of Preprotein translocase subunit SecG from Methanococcoides burtonii (strain DSM 6242 / NBRC 107633 / OCM 468 / ACE-M).